The primary structure comprises 526 residues: MGSSKSKPKDPSQRRRSLEPPDSTHHGGFPASQTPDETAAPDAHRNPSRSFGTVATEPKLFWGFNTSDTVTSPQRAGALAGGVTTFVALYDYESWTETDLSFKKGERLQIVNNTEGDWWLAHSLTTGQTGYIPSNYVAPSDSIQAEEWYFGKITRRESERLLLNPENPRGTFLVRKSETAKGAYCLSVSDFDNAKGPNVKHYKICKLYSGGFYITSRTQFGSLQQLVAYYSKHADGLCHRLTNVCPTSKPQTQGLAKDAWEIPRESLRLEAKLGQGCFGEVWMGTWNGTTRVAIKTLKPGTMSPEAFLQEAQVMKKLRHEKLVQLYAVVSEEPIYIVIEYMSKGSLLDFLKGEMGKYLRLPQLVDMAAQIASGMAYVERMNYVHRDLRAANILVGENLVCKVADFGLARLIEDNEYTARQGAKFPIKWTAPEAALYGRFTIKSDVWSFGILLTELTTKGRVPYPGMVNREVLDQVERAYRMPCPPECPESLHDLMCQCWRKDPEERPTFKYLQAQLLPACVLEVAE.

Positions 1 to 52 are disordered; that stretch reads MGSSKSKPKDPSQRRRSLEPPDSTHHGGFPASQTPDETAAPDAHRNPSRSFG. A lipid anchor (N-myristoyl glycine; by host) is attached at Gly2. A compositionally biased stretch (basic and acidic residues) spans 7–25; it reads KPKDPSQRRRSLEPPDSTH. Residues 81-142 enclose the SH3 domain; sequence GGVTTFVALY…PSNYVAPSDS (62 aa). Positions 148-245 constitute an SH2 domain; it reads WYFGKITRRE…GLCHRLTNVC (98 aa). In terms of domain architecture, Protein kinase spans 267-517; it reads LRLEAKLGQG…TFKYLQAQLL (251 aa). Residues 273–281 and Lys295 each bind ATP; that span reads LGQGCFGEV. Asp386 functions as the Proton acceptor in the catalytic mechanism. Residue Tyr416 is modified to Phosphotyrosine; by autocatalysis.

It belongs to the protein kinase superfamily. Tyr protein kinase family. SRC subfamily. It depends on Mn(2+) as a cofactor. Post-translationally, the phosphorylated form is termed pp60v-src.

It catalyses the reaction L-tyrosyl-[protein] + ATP = O-phospho-L-tyrosyl-[protein] + ADP + H(+). This phosphoprotein, required for both the initiation and the maintenance of neoplastic transformation, is a protein kinase that catalyzes the phosphorylation of tyrosine residues in vitro. This is Tyrosine-protein kinase transforming protein Src (V-SRC) from Gallus gallus (Chicken).